A 901-amino-acid chain; its full sequence is HTH-type transcriptional regulator MalT (901 aa).

39 to 46 (SPAGYGKT) provides a ligand contact to ATP. One can recognise an HTH luxR-type domain in the interval 829-894 (ELIRTSPLTQ…AAVQHAQKLL (66 aa)). Residues 853-872 (NEQIAGELEVAATTIKTHIR) constitute a DNA-binding region (H-T-H motif).

The protein belongs to the MalT family. As to quaternary structure, monomer in solution. Oligomerizes to an active state in the presence of the positive effectors ATP and maltotriose.

With respect to regulation, activated by ATP and maltotriose, which are both required for DNA binding. In terms of biological role, positively regulates the transcription of the maltose regulon whose gene products are responsible for uptake and catabolism of malto-oligosaccharides. Specifically binds to the promoter region of its target genes, recognizing a short DNA motif called the MalT box. The sequence is that of HTH-type transcriptional regulator MalT from Escherichia coli O139:H28 (strain E24377A / ETEC).